We begin with the raw amino-acid sequence, 279 residues long: uncharacterized protein (279 aa).

Over residues 1–29 (MSSRYTSSYTPSSRYGSGWDYSSSYSSSR) the composition is skewed to low complexity. Disordered regions lie at residues 1–111 (MSSR…APRE) and 137–233 (LTLA…AEAL). Residues 30–44 (TSRDRDTGSYRDRDY) show a composition bias toward basic and acidic residues. Low complexity predominate over residues 45–59 (SSTSYTSTRPRYSTY). Over residues 142-153 (EPEESEEEEDDE) the composition is skewed to acidic residues. Residues 170-186 (ESSPVSSPVKEVSSAAS) are compositionally biased toward low complexity. A compositionally biased stretch (polar residues) spans 189–205 (ANDNGNETENRTPSPTV). Residues 221–233 (SDVKKEGGDAEAL) are compositionally biased toward basic and acidic residues.

This is an uncharacterized protein from Caenorhabditis elegans.